A 1212-amino-acid chain; its full sequence is DNA topoisomerase 1 (1212 aa).

Residues 1–114 enclose the Toprim domain; sequence MKLVVVESPA…DVERVTFNAI (114 aa). Glu-7 and Asp-80 together coordinate Mg(2+). Residues 130–556 form the Topo IA-type catalytic domain; it reads DNDLINAYLA…AFWHDFKPKT (427 aa). An interaction with DNA region spans residues 164–169; the sequence is SAGRVQ. Tyr-293 acts as the O-(5'-phospho-DNA)-tyrosine intermediate in catalysis. A C4-type zinc finger spans residues 592 to 619; the sequence is CPSCHTGRLALKGGRFGAFIACSNYPEC. Disordered regions lie at residues 687-742, 758-937, and 1107-1212; these read GKGN…GVST, ALAG…KARA, and RAKM…EVAE. Polar residues-rich tracts occupy residues 708-742 and 770-782; these read ASST…GVST and VSDN…SSTI. Residues 815–840 show a composition bias toward basic and acidic residues; that stretch reads ADNRLLSHRNGDIDSRAIPADHKDSS. 2 stretches are compositionally biased toward polar residues: residues 881–890 and 897–906; these read AITSDNSPSD and STPSSATSSV. Residues 921–934 are compositionally biased toward basic and acidic residues; that stretch reads KADEQAKEEEESRK. Residues 1109–1140 show a composition bias toward basic residues; that stretch reads KMPKKKKTKKAAAKKPAAKKTTTKKAAPKKAT. Residues 1141 to 1151 show a composition bias toward low complexity; it reads TKTATPKSATT. Basic residues predominate over residues 1167 to 1182; the sequence is PAKKAVAKKTTAKKPA. Positions 1183–1199 are enriched in low complexity; it reads SKSATKKAPSSKTTAAK.

This sequence belongs to the type IA topoisomerase family. As to quaternary structure, monomer. Requires Mg(2+) as cofactor.

The catalysed reaction is ATP-independent breakage of single-stranded DNA, followed by passage and rejoining.. Releases the supercoiling and torsional tension of DNA, which is introduced during the DNA replication and transcription, by transiently cleaving and rejoining one strand of the DNA duplex. Introduces a single-strand break via transesterification at a target site in duplex DNA. The scissile phosphodiester is attacked by the catalytic tyrosine of the enzyme, resulting in the formation of a DNA-(5'-phosphotyrosyl)-enzyme intermediate and the expulsion of a 3'-OH DNA strand. The free DNA strand then undergoes passage around the unbroken strand, thus removing DNA supercoils. Finally, in the religation step, the DNA 3'-OH attacks the covalent intermediate to expel the active-site tyrosine and restore the DNA phosphodiester backbone. This chain is DNA topoisomerase 1, found in Zymomonas mobilis subsp. mobilis (strain ATCC 31821 / ZM4 / CP4).